The sequence spans 116 residues: NADH-ubiquinone oxidoreductase chain 3 (116 aa).

The next 3 membrane-spanning stretches (helical) occupy residues 4–24, 56–76, and 88–108; these read IIFL…AAHA, FFLV…LFPL, and LIPI…FEWI.

This sequence belongs to the complex I subunit 3 family.

Its subcellular location is the mitochondrion membrane. It catalyses the reaction a ubiquinone + NADH + 5 H(+)(in) = a ubiquinol + NAD(+) + 4 H(+)(out). Core subunit of the mitochondrial membrane respiratory chain NADH dehydrogenase (Complex I) that is believed to belong to the minimal assembly required for catalysis. Complex I functions in the transfer of electrons from NADH to the respiratory chain. The immediate electron acceptor for the enzyme is believed to be ubiquinone. This chain is NADH-ubiquinone oxidoreductase chain 3 (ND3), found in Strongylocentrotus purpuratus (Purple sea urchin).